The sequence spans 145 residues: RxLR effector protein BLR40 (145 aa).

A signal peptide spans 1 to 22; the sequence is MLLSRAISVVALLACICCGVHT. Positions 44-58 match the RxLR-dEER motif; sequence RRLRTSVDLVDNEER.

This sequence belongs to the RxLR effector family.

Its subcellular location is the secreted. The protein localises to the host cell membrane. Functionally, secreted effector that triggers a robust hypersensitive response (HR) in Lactuca sativa cv. Design that is resistant to multiple B.lactucae races, including Bl:24. The chain is RxLR effector protein BLR40 from Bremia lactucae (Lettuce downy mildew).